A 343-amino-acid chain; its full sequence is Flavone 3'-O-methyltransferase OMT1 (343 aa).

Asparagine 107 provides a ligand contact to (E)-ferulate. S-adenosyl-L-homocysteine contacts are provided by glycine 184, aspartate 207, aspartate 227, methionine 228, methionine 240, and lysine 241. The active-site Proton acceptor is the histidine 245. Residue aspartate 246 participates in (E)-5-hydroxyferulate binding. Residues glutamate 273 and glutamate 305 contribute to the active site.

The protein belongs to the class I-like SAM-binding methyltransferase superfamily. Cation-independent O-methyltransferase family. COMT subfamily. In terms of assembly, homodimer.

It carries out the reaction (E)-5-hydroxyferulate + S-adenosyl-L-methionine = (E)-sinapate + S-adenosyl-L-homocysteine + H(+). It catalyses the reaction luteolin + S-adenosyl-L-methionine = chrysoeriol + S-adenosyl-L-homocysteine + H(+). The enzyme catalyses quercetin + S-adenosyl-L-methionine = isorhamnetin + S-adenosyl-L-homocysteine + H(+). The catalysed reaction is (E)-caffeate + S-adenosyl-L-methionine = (E)-ferulate + S-adenosyl-L-homocysteine + H(+). It carries out the reaction a 3'-hydroxyflavone + S-adenosyl-L-methionine = a 3'-methoxyflavone + S-adenosyl-L-homocysteine + H(+). Its pathway is flavonoid metabolism. Its function is as follows. Catalyzes the 3'-O-methylation of the flavonoids luteolin and quercetin. Catalyzes the 3- of 5-O-methylation of the phenylpropanoids caffeate and 5-hydroxyferulate. Substrate preference is 5-hydroxyferulate &gt; luteolin &gt; quercetin &gt; caffeate. Apigenin, kempferol and 3,4-dimethylquercetin do not seem to be substrates for methylation. In Chrysosplenium americanum (American golden saxifrage), this protein is Flavone 3'-O-methyltransferase OMT1.